Here is a 237-residue protein sequence, read N- to C-terminus: Phosphoribosylaminoimidazole-succinocarboxamide synthase (237 aa).

This sequence belongs to the SAICAR synthetase family.

The enzyme catalyses 5-amino-1-(5-phospho-D-ribosyl)imidazole-4-carboxylate + L-aspartate + ATP = (2S)-2-[5-amino-1-(5-phospho-beta-D-ribosyl)imidazole-4-carboxamido]succinate + ADP + phosphate + 2 H(+). The protein operates within purine metabolism; IMP biosynthesis via de novo pathway; 5-amino-1-(5-phospho-D-ribosyl)imidazole-4-carboxamide from 5-amino-1-(5-phospho-D-ribosyl)imidazole-4-carboxylate: step 1/2. In Listeria monocytogenes serovar 1/2a (strain ATCC BAA-679 / EGD-e), this protein is Phosphoribosylaminoimidazole-succinocarboxamide synthase.